The primary structure comprises 258 residues: Sec-independent protein translocase protein TatC (258 aa).

At 2–23 (SVEDTQPLITHLIELRKRLLNC) the chain is on the cytoplasmic side. The helical transmembrane segment at 24–44 (IISVIVIFLCLVYFANDIYHL) threads the bilayer. Over 45–75 (VSAPLIKQLPQGSTMIATDVASPFFTPIKLT) the chain is Periplasmic. The chain crosses the membrane as a helical span at residues 76 to 96 (FMVSLILSAPVILYQVWAFIA). At 97–115 (PALYKHERRLVVPLLVSSS) the chain is on the cytoplasmic side. Residues 116 to 136 (LLFYIGMAFAYFVVFPLAFGF) traverse the membrane as a helical segment. At 137 to 156 (LANTAPEGVQVSTDIASYLS) the chain is on the periplasmic side. The chain crosses the membrane as a helical span at residues 157–177 (FVMALFMAFGVSFEVPVAIVL). Topologically, residues 178–192 (LCWMGITSPEDLRKK) are cytoplasmic. A helical membrane pass occupies residues 193 to 210 (RPYVLVGAFVVGMLLTPP). Position 211 (D211) is a topological domain, periplasmic. Residues 212 to 232 (VFSQTLLAIPMYCLFEIGVFF) form a helical membrane-spanning segment. Residues 233-258 (SRFYVGKGRNREEENDAEAESEKTEE) lie on the Cytoplasmic side of the membrane.

It belongs to the TatC family. As to quaternary structure, the Tat system comprises two distinct complexes: a TatABC complex, containing multiple copies of TatA, TatB and TatC subunits, and a separate TatA complex, containing only TatA subunits. Substrates initially bind to the TatABC complex, which probably triggers association of the separate TatA complex to form the active translocon.

The protein resides in the cell inner membrane. Part of the twin-arginine translocation (Tat) system that transports large folded proteins containing a characteristic twin-arginine motif in their signal peptide across membranes. Together with TatB, TatC is part of a receptor directly interacting with Tat signal peptides. This is Sec-independent protein translocase protein TatC from Escherichia coli O6:H1 (strain CFT073 / ATCC 700928 / UPEC).